A 226-amino-acid chain; its full sequence is Orotate phosphoribosyltransferase (226 aa).

Residues R107, K108, K111, and 133–141 (EDLTTDGGS) each bind 5-phospho-alpha-D-ribose 1-diphosphate. Orotate is bound at residue T137.

The protein belongs to the purine/pyrimidine phosphoribosyltransferase family. PyrE subfamily. As to quaternary structure, homodimer. Mg(2+) is required as a cofactor.

The catalysed reaction is orotidine 5'-phosphate + diphosphate = orotate + 5-phospho-alpha-D-ribose 1-diphosphate. It participates in pyrimidine metabolism; UMP biosynthesis via de novo pathway; UMP from orotate: step 1/2. Functionally, catalyzes the transfer of a ribosyl phosphate group from 5-phosphoribose 1-diphosphate to orotate, leading to the formation of orotidine monophosphate (OMP). This is Orotate phosphoribosyltransferase from Ruegeria sp. (strain TM1040) (Silicibacter sp.).